The sequence spans 294 residues: Transcription termination/antitermination protein NusG (294 aa).

The segment at Met-1–Asp-91 is disordered. Over residues Asp-25–Glu-39 the composition is skewed to acidic residues. The span at Ala-40–Ala-53 shows a compositional bias: low complexity. Residues Asp-59 to Glu-85 are compositionally biased toward acidic residues.

Belongs to the NusG family.

Participates in transcription elongation, termination and antitermination. This chain is Transcription termination/antitermination protein NusG, found in Streptomyces griseus.